The following is a 295-amino-acid chain: ATP synthase gamma chain (295 aa).

This sequence belongs to the ATPase gamma chain family. F-type ATPases have 2 components, CF(1) - the catalytic core - and CF(0) - the membrane proton channel. CF(1) has five subunits: alpha(3), beta(3), gamma(1), delta(1), epsilon(1). CF(0) has three main subunits: a, b and c.

The protein resides in the cell membrane. Functionally, produces ATP from ADP in the presence of a proton gradient across the membrane. The gamma chain is believed to be important in regulating ATPase activity and the flow of protons through the CF(0) complex. In Acetivibrio thermocellus (strain ATCC 27405 / DSM 1237 / JCM 9322 / NBRC 103400 / NCIMB 10682 / NRRL B-4536 / VPI 7372) (Clostridium thermocellum), this protein is ATP synthase gamma chain.